The primary structure comprises 314 residues: tRNA dimethylallyltransferase (314 aa).

6–13 (GPTAVGKT) contributes to the ATP binding site. Substrate is bound at residue 8 to 13 (TAVGKT). Residues 31-34 (DSRQ) are interaction with substrate tRNA.

The protein belongs to the IPP transferase family. In terms of assembly, monomer. It depends on Mg(2+) as a cofactor.

It catalyses the reaction adenosine(37) in tRNA + dimethylallyl diphosphate = N(6)-dimethylallyladenosine(37) in tRNA + diphosphate. Catalyzes the transfer of a dimethylallyl group onto the adenine at position 37 in tRNAs that read codons beginning with uridine, leading to the formation of N6-(dimethylallyl)adenosine (i(6)A). The polypeptide is tRNA dimethylallyltransferase (Pseudothermotoga lettingae (strain ATCC BAA-301 / DSM 14385 / NBRC 107922 / TMO) (Thermotoga lettingae)).